The sequence spans 806 residues: ATP-dependent zinc metalloprotease FTSH 9, chloroplastic (806 aa).

The transit peptide at 1-62 directs the protein to the chloroplast; the sequence is MTSIELLSPL…SSIQLPQSVP (62 aa). Positions 84–116 are disordered; the sequence is SSRTIVNCQEGDQKASSSEGEGKTNKDKGRKQG. 2 consecutive transmembrane segments (helical) span residues 133-153 and 271-291; these read IIQA…MFVV and GGFF…AGLL. 369–376 provides a ligand contact to ATP; that stretch reads GLPGTGKT. His-594 contacts Zn(2+). Glu-595 is an active-site residue. Zn(2+) is bound by residues His-598 and Asp-677.

In the N-terminal section; belongs to the AAA ATPase family. The protein in the C-terminal section; belongs to the peptidase M41 family. Requires Zn(2+) as cofactor.

It localises to the plastid. The protein localises to the chloroplast thylakoid membrane. Functionally, probable ATP-dependent zinc metallopeptidase. This Arabidopsis thaliana (Mouse-ear cress) protein is ATP-dependent zinc metalloprotease FTSH 9, chloroplastic (FTSH9).